The primary structure comprises 138 residues: Putative pre-16S rRNA nuclease (138 aa).

This sequence belongs to the YqgF nuclease family.

It localises to the cytoplasm. Could be a nuclease involved in processing of the 5'-end of pre-16S rRNA. This is Putative pre-16S rRNA nuclease from Klebsiella pneumoniae subsp. pneumoniae (strain ATCC 700721 / MGH 78578).